A 249-amino-acid chain; its full sequence is ATP synthase subunits region ORF 6 (249 aa).

This Fuscovulum blasticum (Rhodobacter blasticus) protein is ATP synthase subunits region ORF 6.